The chain runs to 185 residues: MGSQKSPYFDANSVFYIGLLYICIYETLAVSWPTNGQQTSWNNRPSYNQYYQYQRAYPGLYNRPTTAPNAYSKNSAAITTRTTYPYYRSSTYNRYPQQQQQQRWGMPRFPAFLPPLRNYQQVNRLEPFLPPPSGDRNIPLTPGVMRMLGISPHGHMMNRMGMNQPYGPDRTVGGITVDGSDVSYA.

Component of the acid-insoluble and acid-soluble organic matrix of calcified layers of the shell (at protein level).

Its subcellular location is the secreted. This is an uncharacterized protein from Lottia gigantea (Giant owl limpet).